We begin with the raw amino-acid sequence, 437 residues long: 3-phosphoshikimate 1-carboxyvinyltransferase (437 aa).

3-phosphoshikimate-binding residues include Lys-26, Ser-27, and Arg-31. Lys-26 contacts phosphoenolpyruvate. Phosphoenolpyruvate contacts are provided by Gly-99 and Arg-127. Ser-172, Gln-174, Asp-320, and Lys-347 together coordinate 3-phosphoshikimate. Gln-174 provides a ligand contact to phosphoenolpyruvate. Residue Asp-320 is the Proton acceptor of the active site. The phosphoenolpyruvate site is built by Arg-351 and Arg-392.

It belongs to the EPSP synthase family. In terms of assembly, monomer.

The protein localises to the cytoplasm. It carries out the reaction 3-phosphoshikimate + phosphoenolpyruvate = 5-O-(1-carboxyvinyl)-3-phosphoshikimate + phosphate. It functions in the pathway metabolic intermediate biosynthesis; chorismate biosynthesis; chorismate from D-erythrose 4-phosphate and phosphoenolpyruvate: step 6/7. Catalyzes the transfer of the enolpyruvyl moiety of phosphoenolpyruvate (PEP) to the 5-hydroxyl of shikimate-3-phosphate (S3P) to produce enolpyruvyl shikimate-3-phosphate and inorganic phosphate. In Methylococcus capsulatus (strain ATCC 33009 / NCIMB 11132 / Bath), this protein is 3-phosphoshikimate 1-carboxyvinyltransferase.